Reading from the N-terminus, the 365-residue chain is Protein RecA (365 aa).

ATP is bound at residue Gly73–Thr80.

Belongs to the RecA family.

The protein resides in the cytoplasm. In terms of biological role, can catalyze the hydrolysis of ATP in the presence of single-stranded DNA, the ATP-dependent uptake of single-stranded DNA by duplex DNA, and the ATP-dependent hybridization of homologous single-stranded DNAs. It interacts with LexA causing its activation and leading to its autocatalytic cleavage. The sequence is that of Protein RecA from Prochlorococcus marinus (strain MIT 9215).